A 900-amino-acid polypeptide reads, in one-letter code: Formin-like protein 5 (900 aa).

Residues 15–32 (SRLVFWLILFSGLLVITL) traverse the membrane as a helical; Signal-anchor segment. The interval 136–209 (RNLATKPGSS…PVSPAKKKED (74 aa)) is disordered. Over residues 160–173 (PPRPPTRPKSPPPR) the composition is skewed to pro residues. Residues 214 to 234 (IIIAVVVTAVSTFLLAALFFL) form a helical membrane-spanning segment. Disordered stretches follow at residues 273–440 (SVKG…DAPK) and 849–900 (ARGR…SDSD). Over residues 281-304 (HQSFNIYSNQGKMSSFDGSNSDTS) the composition is skewed to polar residues. Basic and acidic residues predominate over residues 307–316 (LEERLSHEGL). Low complexity predominate over residues 359–368 (FLKVSSKKAS). Residues 369 to 429 (APPPPVPAPQ…GPKAPRPPSG (61 aa)) show a composition bias toward pro residues. The FH2 domain maps to 433–865 (ALDDDAPKTK…MARKQGSTAS (433 aa)). Residues 860-876 (QGSTASASSETPRQTPS) show a composition bias toward polar residues.

Belongs to the formin-like family. Class-I subfamily. In terms of tissue distribution, expressed in the endosperm. Localizes to the cell plate, a plant-specific membranous component that is assembled at the plane of cell division.

Its subcellular location is the membrane. Might be involved in the organization and polarity of the actin cytoskeleton. Interacts with the barbed end of actin filaments and nucleates actin-filament polymerization in vitro. Seems to play a role in cytokinesis. The polypeptide is Formin-like protein 5 (FH5) (Arabidopsis thaliana (Mouse-ear cress)).